Here is a 430-residue protein sequence, read N- to C-terminus: Enolase (430 aa).

Glutamine 163 lines the (2R)-2-phosphoglycerate pocket. Catalysis depends on glutamate 205, which acts as the Proton donor. Mg(2+)-binding residues include aspartate 242, glutamate 288, and aspartate 315. Positions 340, 369, 370, and 391 each coordinate (2R)-2-phosphoglycerate. The active-site Proton acceptor is the lysine 340.

The protein belongs to the enolase family. The cofactor is Mg(2+).

It is found in the cytoplasm. The protein localises to the secreted. The protein resides in the cell surface. The catalysed reaction is (2R)-2-phosphoglycerate = phosphoenolpyruvate + H2O. The protein operates within carbohydrate degradation; glycolysis; pyruvate from D-glyceraldehyde 3-phosphate: step 4/5. Catalyzes the reversible conversion of 2-phosphoglycerate (2-PG) into phosphoenolpyruvate (PEP). It is essential for the degradation of carbohydrates via glycolysis. In Aster yellows witches'-broom phytoplasma (strain AYWB), this protein is Enolase.